A 453-amino-acid chain; its full sequence is Ferruginol synthase (453 aa).

A helical transmembrane segment spans residues 15–35 (LSKKYGPLMSIHLGSLYTVIV). Position 397 (C397) interacts with heme.

It belongs to the cytochrome P450 family. Heme is required as a cofactor. Expressed in leaf glandular trichomes.

The protein resides in the membrane. It catalyses the reaction abieta-8,11,13-triene + reduced [NADPH--hemoprotein reductase] + O2 = ferruginol + oxidized [NADPH--hemoprotein reductase] + H2O + H(+). The enzyme catalyses ferruginol + reduced [NADPH--hemoprotein reductase] + O2 = 11-hydroxyferruginol + oxidized [NADPH--hemoprotein reductase] + H2O + H(+). It carries out the reaction miltiradiene + 2 reduced [NADPH--hemoprotein reductase] + 2 O2 = 11-oxomiltiradiene + 2 oxidized [NADPH--hemoprotein reductase] + 3 H2O + 2 H(+). It functions in the pathway secondary metabolite biosynthesis; terpenoid biosynthesis. In terms of biological role, monooxygenase involved in the biosynthesis of labdane-related diterpenes natural products. Catalyzes the oxidation of abietatriene to produce ferruginol. Ferruginol is an intermediate in the biosynthesis of carnosate, a potent antioxidant. May also convert miltiradiene into 11-oxomiltiradiene. The chain is Ferruginol synthase from Salvia pomifera (Apple sage).